The primary structure comprises 382 residues: Cell division protein FtsZ (382 aa).

Residues 21–25, 108–110, Glu139, Arg143, and Asp187 each bind GTP; these read GGGSN and GTG. The disordered stretch occupies residues 322–382; the sequence is RAQQQSNFNR…FLRNRRRKSR (61 aa). Over residues 340–352 the composition is skewed to basic and acidic residues; the sequence is KSKEKEAEKKEPR.

It belongs to the FtsZ family. In terms of assembly, homodimer. Polymerizes to form a dynamic ring structure in a strictly GTP-dependent manner. Interacts directly with several other division proteins.

Its subcellular location is the cytoplasm. In terms of biological role, essential cell division protein that forms a contractile ring structure (Z ring) at the future cell division site. The regulation of the ring assembly controls the timing and the location of cell division. One of the functions of the FtsZ ring is to recruit other cell division proteins to the septum to produce a new cell wall between the dividing cells. Binds GTP and shows GTPase activity. The protein is Cell division protein FtsZ of Halalkalibacterium halodurans (strain ATCC BAA-125 / DSM 18197 / FERM 7344 / JCM 9153 / C-125) (Bacillus halodurans).